The sequence spans 373 residues: NADH-quinone oxidoreductase subunit D (373 aa).

It belongs to the complex I 49 kDa subunit family. In terms of assembly, NDH-1 is composed of 14 different subunits. Subunits NuoB, C, D, E, F, and G constitute the peripheral sector of the complex.

It localises to the cell inner membrane. The catalysed reaction is a quinone + NADH + 5 H(+)(in) = a quinol + NAD(+) + 4 H(+)(out). Functionally, NDH-1 shuttles electrons from NADH, via FMN and iron-sulfur (Fe-S) centers, to quinones in the respiratory chain. The immediate electron acceptor for the enzyme in this species is believed to be ubiquinone. Couples the redox reaction to proton translocation (for every two electrons transferred, four hydrogen ions are translocated across the cytoplasmic membrane), and thus conserves the redox energy in a proton gradient. This Syntrophobacter fumaroxidans (strain DSM 10017 / MPOB) protein is NADH-quinone oxidoreductase subunit D.